The chain runs to 670 residues: Alpha-1,4-glucan:maltose-1-phosphate maltosyltransferase (670 aa).

Alpha-maltose 1-phosphate-binding residues include lysine 262, glutamine 322, and aspartate 357. Aspartate 393 serves as the catalytic Nucleophile. Alpha-maltose 1-phosphate is bound at residue asparagine 394. The active-site Proton donor is glutamate 422. Alpha-maltose 1-phosphate is bound at residue 534–535; it reads KY.

The protein belongs to the glycosyl hydrolase 13 family. GlgE subfamily. Homodimer.

It catalyses the reaction alpha-maltose 1-phosphate + [(1-&gt;4)-alpha-D-glucosyl](n) = [(1-&gt;4)-alpha-D-glucosyl](n+2) + phosphate. Functionally, maltosyltransferase that uses maltose 1-phosphate (M1P) as the sugar donor to elongate linear or branched alpha-(1-&gt;4)-glucans. Is involved in a branched alpha-glucan biosynthetic pathway from trehalose, together with TreS, Mak and GlgB. This is Alpha-1,4-glucan:maltose-1-phosphate maltosyltransferase from Chlorobaculum tepidum (strain ATCC 49652 / DSM 12025 / NBRC 103806 / TLS) (Chlorobium tepidum).